Reading from the N-terminus, the 423-residue chain is CDP-diacylglycerol--serine O-phosphatidyltransferase 2 (423 aa).

9 helical membrane-spanning segments follow: residues 38-58 (PHTI…SGAL), 77-97 (WAMI…TILI), 103-123 (VWRL…FLLF), 195-215 (LLLW…RHML), 222-242 (WWDS…WAGM), 294-314 (FVQV…TFFL), 319-339 (WIPP…LIAI), 359-379 (GAFC…CMKF), and 390-410 (TWLI…LLAW).

The protein belongs to the CDP-alcohol phosphatidyltransferase class-I family.

Its subcellular location is the endoplasmic reticulum membrane. The catalysed reaction is a CDP-1,2-diacyl-sn-glycerol + L-serine = a 1,2-diacyl-sn-glycero-3-phospho-L-serine + CMP + H(+). It functions in the pathway phospholipid metabolism; phosphatidylethanolamine biosynthesis; phosphatidylethanolamine from CDP-diacylglycerol: step 1/2. Catalyzes a base-exchange reaction in which the polar head group of phosphatidylethanolamine (PE) or phosphatidylcholine (PC) is replaced by L-serine. The protein is CDP-diacylglycerol--serine O-phosphatidyltransferase 2 (PSS2) of Oryza sativa subsp. japonica (Rice).